A 222-amino-acid chain; its full sequence is Large ribosomal subunit protein mL64 (222 aa).

Disordered stretches follow at residues 19–46 (APGSRGYRARPPPRRRPGPRWPDPEDLL) and 188–222 (KRLKEEKQKRKKEARAAALAAAVAQDPAASGAPSS). A compositionally biased stretch (basic residues) spans 25 to 36 (YRARPPPRRRPG). The stretch at 99–212 (MQESLRVKQL…AAALAAAVAQ (114 aa)) forms a coiled coil. The short motif at 184-200 (KKERKRLKEEKQKRKKE) is the Nuclear localization signal element. The span at 203-212 (AAALAAAVAQ) shows a compositional bias: low complexity.

This sequence belongs to the mitochondrion-specific ribosomal protein mL64 family. In terms of assembly, component of the mitochondrial large ribosomal subunit (mt-LSU). Mature mammalian 55S mitochondrial ribosomes consist of a small (28S) and a large (39S) subunit. The 28S small subunit contains a 12S ribosomal RNA (12S mt-rRNA) and 30 different proteins. The 39S large subunit contains a 16S rRNA (16S mt-rRNA), a copy of mitochondrial valine transfer RNA (mt-tRNA(Val)), which plays an integral structural role, and 52 different proteins. Interacts with GADD45A, GADD45B and GADD45G. Interacts with NR4A1 via the NR4A1 AB domain. Interacts with ATAD3A and ATAD3B. (Microbial infection) Interacts with the human papilloma virus type 16 (HPV 16) minor capsid protein L2. As to expression, widely expressed. Highly expressed in the thyroid gland, heart, lymph nodes, trachea and adrenal tissues. Expressed at lower level in liver skeletal muscle, kidney, pancreas, testis, ovary and stomach. Barely detectable in adrenal adenoma and papillary thyroid cancer.

The protein resides in the mitochondrion. Its subcellular location is the nucleus. Acts as a negative regulator of G1 to S cell cycle phase progression by inhibiting cyclin-dependent kinases. Inhibitory effects are additive with GADD45 proteins but also occur in the absence of GADD45 proteins. Acts as a repressor of the orphan nuclear receptor NR4A1 by inhibiting AB domain-mediated transcriptional activity. May be involved in the hormone-mediated regulation of NR4A1 transcriptional activity. May play a role in mitochondrial protein synthesis. This chain is Large ribosomal subunit protein mL64 (GADD45GIP1), found in Homo sapiens (Human).